The following is a 513-amino-acid chain: 2-isopropylmalate synthase (513 aa).

The Pyruvate carboxyltransferase domain occupies V7–F269. The Mn(2+) site is built by D16, H204, H206, and N240. A regulatory domain region spans residues A393–L513.

It belongs to the alpha-IPM synthase/homocitrate synthase family. LeuA type 1 subfamily. In terms of assembly, homodimer. Mn(2+) serves as cofactor.

It localises to the cytoplasm. It carries out the reaction 3-methyl-2-oxobutanoate + acetyl-CoA + H2O = (2S)-2-isopropylmalate + CoA + H(+). The protein operates within amino-acid biosynthesis; L-leucine biosynthesis; L-leucine from 3-methyl-2-oxobutanoate: step 1/4. Functionally, catalyzes the condensation of the acetyl group of acetyl-CoA with 3-methyl-2-oxobutanoate (2-ketoisovalerate) to form 3-carboxy-3-hydroxy-4-methylpentanoate (2-isopropylmalate). This Solidesulfovibrio magneticus (strain ATCC 700980 / DSM 13731 / RS-1) (Desulfovibrio magneticus) protein is 2-isopropylmalate synthase.